We begin with the raw amino-acid sequence, 398 residues long: Substance-K receptor (398 aa).

Residues 1–32 (MGTCDIVTEANISSGPESNTTGITAFSMPSWQ) lie on the Extracellular side of the membrane. N-linked (GlcNAc...) asparagine glycans are attached at residues Asn-11 and Asn-19. A helical membrane pass occupies residues 33–56 (LALWATAYLALVLVAVTGNAIVIW). Topologically, residues 57–69 (IILAHRRMRTVTN) are cytoplasmic. The helical transmembrane segment at 70 to 90 (YFIVNLALADLCMAAFNAAFN) threads the bilayer. Residues 91-107 (FVYASHNIWYFGRAFCY) are Extracellular-facing. Cys-106 and Cys-181 are oxidised to a cystine. A helical transmembrane segment spans residues 108–129 (FQNLFPITAMFVSIYSMTAIAA). Residues 130-149 (DRYMAIVHPFQPRLSAPSTK) are Cytoplasmic-facing. A helical membrane pass occupies residues 150–170 (AVIAGIWLVALALASPQCFYS). Over 171-196 (TVTMDQGATKCVVAWPEDSGGKTLLL) the chain is Extracellular. The chain crosses the membrane as a helical span at residues 197–218 (YHLVVIALIYFLPLAVMFVAYS). Residues 219-251 (VIGLTLWRRAVPGHQAHGANLRHLQAMKKFVKT) lie on the Cytoplasmic side of the membrane. A helical membrane pass occupies residues 252–272 (MVLVVLTFAICWLPYHLYFIL). Residues 273-290 (GSFQEDIYCHKFIQQVYL) lie on the Extracellular side of the membrane. The helical transmembrane segment at 291–310 (ALFWLAMSSTMYNPIIYCCL) threads the bilayer. The Cytoplasmic segment spans residues 311–398 (NHRFRSGFRL…LAPTKTHVEI (88 aa)). A lipid anchor (S-palmitoyl cysteine) is attached at Cys-324.

The protein belongs to the G-protein coupled receptor 1 family.

It localises to the cell membrane. Its function is as follows. This is a receptor for the tachykinin neuropeptide substance K (neurokinin A). It is associated with G proteins that activate a phosphatidylinositol-calcium second messenger system. The rank order of affinity of this receptor to tachykinins is: substance K &gt; neuromedin-K &gt; substance P. This Homo sapiens (Human) protein is Substance-K receptor (TACR2).